A 66-amino-acid polypeptide reads, in one-letter code: Delta-buthitoxin-Hj1a (66 aa).

One can recognise an LCN-type CS-alpha/beta domain in the interval R4 to H66. 4 disulfide bridges follow: C14–C65, C18–C38, C24–C48, and C28–C50.

It belongs to the long (4 C-C) scorpion toxin superfamily. Sodium channel inhibitor family. Alpha subfamily. As to expression, expressed by the venom gland.

It is found in the secreted. This recombinant toxin slows fast inactivation on Nav1.1/SCN1A (EC(50)=17 nM), Nav1.4/SN4A (EC(50)=7.5 nM), Nav1.5/SCN5A (EC(50)=9.2 nM) and Nav1.6/SCN8A (EC(50)=37.3 nM) voltage-gated sodium channels. On Nav1.1/SCN1A channel, it acts as an agonist by inducing a shift in both the voltage dependence of channel inactivation (alpha-toxin activity) and activation (beta-toxin activity). In vivo, shows moderate insecticidal activities. It induces irreversible paralysis in blowflies and lethal effects in D.melanogaster. The chain is Delta-buthitoxin-Hj1a from Hottentotta judaicus (Black scorpion).